The following is a 264-amino-acid chain: tRNA pseudouridine synthase A (264 aa).

The active-site Nucleophile is Asp-56. Tyr-114 contributes to the substrate binding site.

Belongs to the tRNA pseudouridine synthase TruA family. In terms of assembly, homodimer.

The catalysed reaction is uridine(38/39/40) in tRNA = pseudouridine(38/39/40) in tRNA. In terms of biological role, formation of pseudouridine at positions 38, 39 and 40 in the anticodon stem and loop of transfer RNAs. This chain is tRNA pseudouridine synthase A, found in Buchnera aphidicola subsp. Baizongia pistaciae (strain Bp).